Consider the following 692-residue polypeptide: Elongation factor G 2 (692 aa).

Residues 8–283 form the tr-type G domain; sequence KDVRNIGIMA…GVVNYLPSPL (276 aa). GTP contacts are provided by residues 17–24, 81–85, and 135–138; these read AHIDAGKT, DTPGH, and NKMD.

It belongs to the TRAFAC class translation factor GTPase superfamily. Classic translation factor GTPase family. EF-G/EF-2 subfamily.

It localises to the cytoplasm. Functionally, catalyzes the GTP-dependent ribosomal translocation step during translation elongation. During this step, the ribosome changes from the pre-translocational (PRE) to the post-translocational (POST) state as the newly formed A-site-bound peptidyl-tRNA and P-site-bound deacylated tRNA move to the P and E sites, respectively. Catalyzes the coordinated movement of the two tRNA molecules, the mRNA and conformational changes in the ribosome. The sequence is that of Elongation factor G 2 from Desulfotalea psychrophila (strain LSv54 / DSM 12343).